The chain runs to 48 residues: M-oxotoxin-Ot1c (48 aa).

The protein resides in the secreted. It localises to the target cell membrane. In terms of biological role, disrupts cell membranes, particularly those rich in phosphocholine, through formation of pores. Has antimicrobial activity, hemolytic activity and insecticidal activity. This chain is M-oxotoxin-Ot1c, found in Oxyopes takobius (Lynx spider).